The following is a 110-amino-acid chain: Large ribosomal subunit protein uL22 (110 aa).

The protein belongs to the universal ribosomal protein uL22 family. In terms of assembly, part of the 50S ribosomal subunit.

Its function is as follows. This protein binds specifically to 23S rRNA; its binding is stimulated by other ribosomal proteins, e.g. L4, L17, and L20. It is important during the early stages of 50S assembly. It makes multiple contacts with different domains of the 23S rRNA in the assembled 50S subunit and ribosome. The globular domain of the protein is located near the polypeptide exit tunnel on the outside of the subunit, while an extended beta-hairpin is found that lines the wall of the exit tunnel in the center of the 70S ribosome. This chain is Large ribosomal subunit protein uL22, found in Paracidovorax citrulli (strain AAC00-1) (Acidovorax citrulli).